The primary structure comprises 340 residues: Phosphoribosylformylglycinamidine cyclo-ligase (340 aa).

Belongs to the AIR synthase family.

It localises to the cytoplasm. It carries out the reaction 2-formamido-N(1)-(5-O-phospho-beta-D-ribosyl)acetamidine + ATP = 5-amino-1-(5-phospho-beta-D-ribosyl)imidazole + ADP + phosphate + H(+). Its pathway is purine metabolism; IMP biosynthesis via de novo pathway; 5-amino-1-(5-phospho-D-ribosyl)imidazole from N(2)-formyl-N(1)-(5-phospho-D-ribosyl)glycinamide: step 2/2. This is Phosphoribosylformylglycinamidine cyclo-ligase from Streptococcus agalactiae serotype III (strain NEM316).